The chain runs to 769 residues: Major inner protein P1 (769 aa).

In terms of assembly, homodimer. Associates with the polymerase complex.

It is found in the virion. P1 is the major inner capsid (core) protein of the polyhedral procapsid, which is responsible for genomic replication and transcription. Forms a dodecahedral shell from 60 asymmetric dimers. Binds to RNA and may be involved in genomic packaging. The polypeptide is Major inner protein P1 (P1) (Pseudomonas phage phi6 (Bacteriophage phi-6)).